An 89-amino-acid chain; its full sequence is UPF0367 protein MAE_19160 (89 aa).

It belongs to the UPF0367 family.

The polypeptide is UPF0367 protein MAE_19160 (Microcystis aeruginosa (strain NIES-843 / IAM M-2473)).